Here is a 493-residue protein sequence, read N- to C-terminus: Ribose import ATP-binding protein RbsA (493 aa).

2 consecutive ABC transporter domains span residues 3–239 (IEMK…VGRE) and 246–493 (KRTP…TGGR). 35 to 42 (GENGAGKS) serves as a coordination point for ATP.

The protein belongs to the ABC transporter superfamily. Ribose importer (TC 3.A.1.2.1) family. As to quaternary structure, the complex is composed of an ATP-binding protein (RbsA), two transmembrane proteins (RbsC) and a solute-binding protein (RbsB).

The protein localises to the cell membrane. It catalyses the reaction D-ribose(out) + ATP + H2O = D-ribose(in) + ADP + phosphate + H(+). Functionally, part of the ABC transporter complex RbsABC involved in ribose import. Responsible for energy coupling to the transport system. The protein is Ribose import ATP-binding protein RbsA of Bacillus subtilis (strain 168).